A 752-amino-acid chain; its full sequence is Protein GCN20 (752 aa).

A2 carries the N-acetylalanine modification. 2 ABC transporter domains span residues 199–464 (IHID…RKNA) and 532–748 (IQLQ…AAGV). ATP contacts are provided by residues 232 to 239 (GQNGIGKS) and 565 to 572 (GANGCGKT).

This sequence belongs to the ABC transporter superfamily. ABCF family. EF3 subfamily. Interacts (via N-terminus) with GCN1 (via C-terminus); this interaction stimulates GCN2 kinase activity in response to amino acid starvation. The GCN1-GCN20 complex interacts with GCN2 on translating ribosomes in amino acid-starved cells; this association stimulates GCN2 kinase activation by uncharged tRNAs, and hence allowing GCN4 translational activation and derepression of amino acid biosynthetic genes. Associates with ribosomes.

Functionally, acts as a positive activator of the GCN2 protein kinase activity in response to in response to low amino acid, carbon, or purine availability. Component of the GCN1-GCN20 complex that forms a complex with GCN2 on translating ribosomes; during this process, GCN20 helps GCN1 to act as a chaperone to facilitate delivery of uncharged tRNAs that enter the A site of ribosomes to the tRNA-binding domain of GCN2, and hence stimulating GCN2 kinase activity. Participates in gene-specific mRNA translation activation, such as the transcriptional activator GCN4, by promoting the GCN2-mediated phosphorylation of eukaryotic translation initiation factor 2 (eIF-2-alpha/SUI2) on 'Ser-52', and hence allowing GCN4-mediated reprogramming of amino acid biosynthetic gene expression to alleviate nutrient depletion. The chain is Protein GCN20 from Saccharomyces cerevisiae (strain ATCC 204508 / S288c) (Baker's yeast).